A 244-amino-acid chain; its full sequence is Thaumatin-like protein 1 (244 aa).

A signal peptide spans 1-22 (MKFEALIGLVLVFLSEHAGVYS). 8 cysteine pairs are disulfide-bonded: Cys-31–Cys-243, Cys-79–Cys-89, Cys-94–Cys-101, Cys-149–Cys-232, Cys-154–Cys-215, Cys-162–Cys-178, Cys-182–Cys-191, and Cys-192–Cys-202. An N-linked (GlcNAc...) asparagine glycan is attached at Asn-150.

Belongs to the thaumatin family. N-glycosylated. Style.

The protein resides in the secreted. The chain is Thaumatin-like protein 1 (TL1) from Pyrus pyrifolia (Chinese pear).